A 540-amino-acid polypeptide reads, in one-letter code: 2-isopropylmalate synthase (540 aa).

Residues 8-273 (VLIFDTTLRD…FFGRDQDSPT (266 aa)) enclose the Pyruvate carboxyltransferase domain. Mn(2+) contacts are provided by Asp17, His208, His210, and Asn244. The tract at residues 408–540 (QLQLVQVSCG…AVVLDARPTL (133 aa)) is regulatory domain.

It belongs to the alpha-IPM synthase/homocitrate synthase family. LeuA type 1 subfamily. In terms of assembly, homodimer. Mn(2+) serves as cofactor.

It is found in the cytoplasm. It carries out the reaction 3-methyl-2-oxobutanoate + acetyl-CoA + H2O = (2S)-2-isopropylmalate + CoA + H(+). It functions in the pathway amino-acid biosynthesis; L-leucine biosynthesis; L-leucine from 3-methyl-2-oxobutanoate: step 1/4. In terms of biological role, catalyzes the condensation of the acetyl group of acetyl-CoA with 3-methyl-2-oxobutanoate (2-ketoisovalerate) to form 3-carboxy-3-hydroxy-4-methylpentanoate (2-isopropylmalate). In Parasynechococcus marenigrum (strain WH8102), this protein is 2-isopropylmalate synthase.